The following is a 365-amino-acid chain: Probable caffeine synthase 5 (365 aa).

Tyr-18 contributes to the S-adenosyl-L-homocysteine binding site. A caffeine-binding site is contributed by Thr-25. 6 residues coordinate S-adenosyl-L-homocysteine: Cys-61, Asn-66, Asp-98, Leu-99, Ser-134, and Phe-135. Positions 152, 155, and 156 each coordinate caffeine. Mg(2+)-binding residues include Asn-173, Asp-259, Phe-261, and Asn-262. Phe-317 lines the caffeine pocket.

Belongs to the methyltransferase superfamily. Type-7 methyltransferase family. Mg(2+) serves as cofactor.

Its pathway is alkaloid biosynthesis. May be involved in the biosynthesis of caffeine. The protein is Probable caffeine synthase 5 of Camellia sinensis (Tea plant).